The primary structure comprises 240 residues: Ubiquinone biosynthesis O-methyltransferase (240 aa).

S-adenosyl-L-methionine-binding residues include R44, G64, D85, and M129.

This sequence belongs to the methyltransferase superfamily. UbiG/COQ3 family.

It carries out the reaction a 3-demethylubiquinol + S-adenosyl-L-methionine = a ubiquinol + S-adenosyl-L-homocysteine + H(+). The enzyme catalyses a 3-(all-trans-polyprenyl)benzene-1,2-diol + S-adenosyl-L-methionine = a 2-methoxy-6-(all-trans-polyprenyl)phenol + S-adenosyl-L-homocysteine + H(+). It functions in the pathway cofactor biosynthesis; ubiquinone biosynthesis. O-methyltransferase that catalyzes the 2 O-methylation steps in the ubiquinone biosynthetic pathway. In Escherichia coli O81 (strain ED1a), this protein is Ubiquinone biosynthesis O-methyltransferase.